A 547-amino-acid polypeptide reads, in one-letter code: MTKSVGDEESQYIEDPSFAAAAAFTGGRDGVSYSNQRFAEGSGHSSDLAKSLEDYRPPDEKPSSLSSVGEGGANEEEKGGNDGGPLARIQTGLFSPRLRNHRKKILSKFVLNNFFIACVCVSLISIYWGACYGTDRYFFKVKNIVVLQDAPSNTSVQSISAIIPSLLASVPGTWHIYNATSFHRKFGTTNSTEIDRKIVDLIYDERYWLALNVKPNATDTLYNSLISQDANSEFNSSIFFESVFESGRDPSSVKSTILPLMQQLEVRLQKYYVKEYLPSLMSNITSNDRDLNINMENWAIAGQLLFTYNDYRPFADRILMAPLQVGLIYCILLTVLQLSLYGKLHGEMARVLKPKHILIYRLLISWATYFLLSIGFCTVSAIFRIDFTPAFGRGGFVVYWMSTWLVMMAVGGANENVLSLVIAYCPPYLSIWLMTWIILNISASFYPMVLNNEFYRYGYIMPIHNAVDIYKVIFLNLTKRKMGRNYGILVAWVALNTSLMPFCMKFAGKKMQKNAMQAAEAAVAAATQRASRPAEANTDKNNNPPGN.

The tract at residues 35–86 (NQRFAEGSGHSSDLAKSLEDYRPPDEKPSSLSSVGEGGANEEEKGGNDGGPL) is disordered. Basic and acidic residues predominate over residues 50 to 62 (KSLEDYRPPDEKP). A Phosphothreonine modification is found at T91. 8 helical membrane passes run 109-129 (FVLN…IYWG), 159-179 (ISAI…IYNA), 318-338 (ILMA…VLQL), 363-383 (LISW…SAIF), 394-414 (GGFV…GGAN), 418-438 (LSLV…TWII), 457-477 (YGYI…FLNL), and 488-508 (ILVA…KFAG). The span at 526–536 (ATQRASRPAEA) shows a compositional bias: low complexity. The disordered stretch occupies residues 526–547 (ATQRASRPAEANTDKNNNPPGN).

To yeast YJR015W.

It is found in the membrane. Functionally, may function as a N-methyl-N'nitro-N-nitrosoguanidine (MNNG) export permease. In Saccharomyces cerevisiae (strain ATCC 204508 / S288c) (Baker's yeast), this protein is Nitrosoguanidine resistance protein SNG1 (SNG1).